A 197-amino-acid chain; its full sequence is SLDGAHAPWCDAEHRDIVNLKKSEFWNKGGPAWQKIVVCLVFDGIDPCDKNTLDLLATVGIYQDGVMKKDVDGKDTVVHIFEYTTQLSVTPNQQLIRPNDNDSTSLPPVQMIFCLKQKNSKKINSHRWLFNGFGRILNPEVCILLDAGTKPGPKSLMALWEAFYNDKDLGGACGEIHAMLGRGGVFGRKLLNPLVAA.

It belongs to the chitin synthase family. Class III subfamily.

The protein resides in the cell membrane. It catalyses the reaction [(1-&gt;4)-N-acetyl-beta-D-glucosaminyl](n) + UDP-N-acetyl-alpha-D-glucosamine = [(1-&gt;4)-N-acetyl-beta-D-glucosaminyl](n+1) + UDP + H(+). In terms of biological role, polymerizes chitin, a structural polymer of the cell wall and septum, by transferring the sugar moiety of UDP-GlcNAc to the non-reducing end of the growing chitin polymer. This is Chitin synthase 3 (CHS3) from Exophiala jeanselmei (Dematiaceous fungus).